We begin with the raw amino-acid sequence, 278 residues long: Shikimate dehydrogenase (NADP(+)) (278 aa).

Residues serine 19–serine 21 and threonine 66 contribute to the shikimate site. Residue lysine 70 is the Proton acceptor of the active site. Shikimate is bound by residues asparagine 91 and aspartate 106. NADP(+) is bound by residues glycine 130 to serine 134, asparagine 152 to lysine 157, and leucine 222. Residue tyrosine 224 coordinates shikimate. Glycine 245 is an NADP(+) binding site.

This sequence belongs to the shikimate dehydrogenase family. In terms of assembly, homodimer.

It catalyses the reaction shikimate + NADP(+) = 3-dehydroshikimate + NADPH + H(+). It participates in metabolic intermediate biosynthesis; chorismate biosynthesis; chorismate from D-erythrose 4-phosphate and phosphoenolpyruvate: step 4/7. Involved in the biosynthesis of the chorismate, which leads to the biosynthesis of aromatic amino acids. Catalyzes the reversible NADPH linked reduction of 3-dehydroshikimate (DHSA) to yield shikimate (SA). This Methanococcus aeolicus (strain ATCC BAA-1280 / DSM 17508 / OCM 812 / Nankai-3) protein is Shikimate dehydrogenase (NADP(+)).